The sequence spans 131 residues: Small ribosomal subunit protein uS12 (131 aa).

Residues 1 to 32 (MPTFSQLVRKGRTAPRYKTASPALQGSPQRRG) form a disordered region. Aspartate 89 bears the 3-methylthioaspartic acid mark. The tract at residues 110-131 (RKQGRSKYGAKRAKGGAAAGKK) is disordered. Basic residues predominate over residues 111 to 131 (KQGRSKYGAKRAKGGAAAGKK).

It belongs to the universal ribosomal protein uS12 family. As to quaternary structure, part of the 30S ribosomal subunit. Contacts proteins S8 and S17. May interact with IF1 in the 30S initiation complex.

With S4 and S5 plays an important role in translational accuracy. Functionally, interacts with and stabilizes bases of the 16S rRNA that are involved in tRNA selection in the A site and with the mRNA backbone. Located at the interface of the 30S and 50S subunits, it traverses the body of the 30S subunit contacting proteins on the other side and probably holding the rRNA structure together. The combined cluster of proteins S8, S12 and S17 appears to hold together the shoulder and platform of the 30S subunit. This chain is Small ribosomal subunit protein uS12, found in Acidobacterium capsulatum (strain ATCC 51196 / DSM 11244 / BCRC 80197 / JCM 7670 / NBRC 15755 / NCIMB 13165 / 161).